We begin with the raw amino-acid sequence, 347 residues long: Phosphoribosylformylglycinamidine cyclo-ligase (347 aa).

The protein belongs to the AIR synthase family.

It is found in the cytoplasm. It carries out the reaction 2-formamido-N(1)-(5-O-phospho-beta-D-ribosyl)acetamidine + ATP = 5-amino-1-(5-phospho-beta-D-ribosyl)imidazole + ADP + phosphate + H(+). It functions in the pathway purine metabolism; IMP biosynthesis via de novo pathway; 5-amino-1-(5-phospho-D-ribosyl)imidazole from N(2)-formyl-N(1)-(5-phospho-D-ribosyl)glycinamide: step 2/2. The chain is Phosphoribosylformylglycinamidine cyclo-ligase from Syntrophus aciditrophicus (strain SB).